Here is a 506-residue protein sequence, read N- to C-terminus: Glutamate--tRNA ligase (506 aa).

Positions 23–33 (PSPTGTPHVGL) match the 'HIGH' region motif. Positions 267–271 (KLSKR) match the 'KMSKS' region motif. ATP is bound at residue lysine 270.

The protein belongs to the class-I aminoacyl-tRNA synthetase family. Glutamate--tRNA ligase type 1 subfamily. As to quaternary structure, monomer.

The protein resides in the cytoplasm. It carries out the reaction tRNA(Glu) + L-glutamate + ATP = L-glutamyl-tRNA(Glu) + AMP + diphosphate. Functionally, catalyzes the attachment of glutamate to tRNA(Glu) in a two-step reaction: glutamate is first activated by ATP to form Glu-AMP and then transferred to the acceptor end of tRNA(Glu). In Clavibacter sepedonicus (Clavibacter michiganensis subsp. sepedonicus), this protein is Glutamate--tRNA ligase.